The primary structure comprises 233 residues: Homeobox protein ceh-30 (233 aa).

Polar residues predominate over residues 50–85 (NNSTYSHDLDPSPQSVRSDLSTSPRASSPDRNSPMS). 2 disordered regions span residues 50–93 (NNST…KART) and 206–233 (FQAT…SNSD). The segment at residues 88–147 (SRKARTIFTDKQLQELENTFEKQKYLSVQDRMDLAHRMGLSDTQVKTWYQNRRTKWKRQA) is a DNA-binding region (homeobox). Over residues 224–233 (PQLDVSSNSD) the composition is skewed to polar residues.

Its subcellular location is the nucleus. Functionally, cell-type specific anti-apoptotic transcription factor required for the sexually dimorphic survival of the male-specific CEM (cephalic male) sensory neurons during sex determination. In hermaphrodites, the homologous cells undergo programmed cell death due to transcriptional repression of ceh-30 by tra-1, the terminal regulator in the sex determination pathway. The sequence is that of Homeobox protein ceh-30 from Caenorhabditis briggsae.